The primary structure comprises 876 residues: Leucine--tRNA ligase (876 aa).

Residues 43–53 (PYPSGRIHIGH) carry the 'HIGH' region motif. A 'KMSKS' region motif is present at residues 632–636 (KMSKS). Residue K635 coordinates ATP.

Belongs to the class-I aminoacyl-tRNA synthetase family.

The protein resides in the cytoplasm. It catalyses the reaction tRNA(Leu) + L-leucine + ATP = L-leucyl-tRNA(Leu) + AMP + diphosphate. This is Leucine--tRNA ligase from Allorhizobium ampelinum (strain ATCC BAA-846 / DSM 112012 / S4) (Agrobacterium vitis (strain S4)).